Consider the following 298-residue polypeptide: ATP synthase gamma chain (298 aa).

Belongs to the ATPase gamma chain family. In terms of assembly, F-type ATPases have 2 components, CF(1) - the catalytic core - and CF(0) - the membrane proton channel. CF(1) has five subunits: alpha(3), beta(3), gamma(1), delta(1), epsilon(1). CF(0) has three main subunits: a, b and c.

It is found in the cell inner membrane. Produces ATP from ADP in the presence of a proton gradient across the membrane. The gamma chain is believed to be important in regulating ATPase activity and the flow of protons through the CF(0) complex. In Francisella tularensis subsp. tularensis (strain FSC 198), this protein is ATP synthase gamma chain.